The sequence spans 240 residues: Allene oxide cyclase, chloroplastic (240 aa).

Residues 1-49 (MAAAAPSRVSVRAAAPGQTGGFAKIRPQVVVAAAARSAGVSGRRARSVR) constitute a chloroplast transit peptide.

It belongs to the allene oxide cyclase family.

The protein resides in the plastid. It is found in the chloroplast. The enzyme catalyses (9Z,13S,15Z)-12,13-epoxyoctadeca-9,11,15-trienoate = (9S,13S,15Z)-12-oxophyto-10,15-dienoate. The protein operates within lipid metabolism; polyunsaturated fatty acid biosynthesis. In terms of biological role, involved in the production of 12-oxo-phytodienoic acid (OPDA), a precursor of jasmonic acid (JA). Required for the production of JA in response to wounding. Necessary for flower and coleoptile development regulation by light, including blue (BL), red (RL) and far red (FR) lights. Involved in the auxin-mediated signaling pathway leading to growth stimulation. Essential for photodestruction of phyA upon activation by RL and FR. Implicated in responses to salt stress (NaCl). Its function is as follows. Confers resistance to incompatible strains of the blast fungus Magnaporthe grisea, jasmonic acid (JA) thus playing a significant role in the resistance to fungal infection. Implicated in riboflavin-induced resistance to the sheath blight Rhizoctonia solani. Required for Pseudomonas fluorescens-mediated JA-dependent induced systemic resistance (ISR). Confers some resistance, independently of the JA pathway but probably via OPDA accumulation, to brown planthopper (BPH, Nilaparvata lugens), a destructive, monophagous, piercing-sucking insect, mainly by reducing its feeding activity and survival rate. Triggers resistance to the chewing insect striped stem borer (SSB) Chilo suppressalis, to the root hemiparasite witchweed Striga hermonthica, and to the root feeder insect rice water weevil Lissorhoptrus oryzophilus, in a JA-dependent manner, by attenuating both the growth mass and growth rate of caterpillars. This Oryza sativa subsp. indica (Rice) protein is Allene oxide cyclase, chloroplastic.